Consider the following 89-residue polypeptide: MTEAQKSLKRTLIGKVVSDKRQKTVTVLVERRVKHELYGKIIARSSKYHAHDEKGEYKLGDMIEITESRPLSKTKNWVASRLVQKAGLL.

Belongs to the universal ribosomal protein uS17 family. Part of the 30S ribosomal subunit.

Functionally, one of the primary rRNA binding proteins, it binds specifically to the 5'-end of 16S ribosomal RNA. This is Small ribosomal subunit protein uS17 from Verminephrobacter eiseniae (strain EF01-2).